Here is a 460-residue protein sequence, read N- to C-terminus: Interleukin-1 receptor-associated kinase 4 (460 aa).

N-acetylmethionine is present on M1. The Death domain maps to 20–104; it reads RKLSDFIDPQ…APASLLLPDA (85 aa). K34 is subject to N6-acetyllysine. A Protein kinase domain is found at 186-454; the sequence is SVGGNKMGEG…PDIKKVQQLL (269 aa). ATP is bound by residues 192–200 and K213; that span reads MGEGGFGVV. D311 acts as the Proton acceptor in catalysis. ATP-binding positions include 313-316 and D329; that span reads KSAN. T342 and T345 each carry phosphothreonine. S346 carries the phosphoserine modification.

It belongs to the protein kinase superfamily. TKL Ser/Thr protein kinase family. Pelle subfamily. Associates with MYD88 and IRAK2 to form a ternary complex called the Myddosome. Once phosphorylated, IRAK4 dissociates from the receptor complex and then associates with the TNF receptor-associated factor 6 (TRAF6), IRAK1, and PELI1; this intermediate complex is required for subsequent NF-kappa-B activation. Direct binding of SMAD6 to PELI1 prevents complex formation and hence negatively regulates IL1R-TLR signaling and eventually NF-kappa-B-mediated gene expression. Interacts with IL1RL1. Interacts (when phosphorylated) with IRAK1. May interact (when phosphorylated) with IRAK3. The cofactor is Mg(2+). Post-translationally, phosphorylated.

It localises to the cytoplasm. It catalyses the reaction L-seryl-[protein] + ATP = O-phospho-L-seryl-[protein] + ADP + H(+). It carries out the reaction L-threonyl-[protein] + ATP = O-phospho-L-threonyl-[protein] + ADP + H(+). Its function is as follows. Serine/threonine-protein kinase that plays a critical role in initiating innate immune response against foreign pathogens. Involved in Toll-like receptor (TLR) and IL-1R signaling pathways. Is rapidly recruited by MYD88 to the receptor-signaling complex upon TLR activation to form the Myddosome together with IRAK2. Phosphorylates initially IRAK1, thus stimulating the kinase activity and intensive autophosphorylation of IRAK1. Phosphorylates E3 ubiquitin ligases Pellino proteins (PELI1, PELI2 and PELI3) to promote pellino-mediated polyubiquitination of IRAK1. Then, the ubiquitin-binding domain of IKBKG/NEMO binds to polyubiquitinated IRAK1 bringing together the IRAK1-MAP3K7/TAK1-TRAF6 complex and the NEMO-IKKA-IKKB complex. In turn, MAP3K7/TAK1 activates IKKs (CHUK/IKKA and IKBKB/IKKB) leading to NF-kappa-B nuclear translocation and activation. Alternatively, phosphorylates TIRAP to promote its ubiquitination and subsequent degradation. Phosphorylates NCF1 and regulates NADPH oxidase activation after LPS stimulation suggesting a similar mechanism during microbial infections. The sequence is that of Interleukin-1 receptor-associated kinase 4 (IRAK4) from Homo sapiens (Human).